Consider the following 330-residue polypeptide: Probable transposase for insertion sequence element ISH11 (330 aa).

The protein belongs to the transposase 11 family.

Functionally, involved in the transposition of the insertion sequence ISH11. In Halobacterium salinarum (strain ATCC 29341 / DSM 671 / R1), this protein is Probable transposase for insertion sequence element ISH11.